A 260-amino-acid polypeptide reads, in one-letter code: Carbonic anhydrase 3 (260 aa).

Position 2 is an N-acetylalanine (alanine 2). In terms of domain architecture, Alpha-carbonic anhydrase spans 3–259 (KEWGYASHNG…IKGRVVRASF (257 aa)). A phosphoserine mark is found at serine 29, serine 43, serine 48, serine 50, and serine 55. Residues 64-67 (KTCR) are involved in proton transfer. Threonine 73 bears the Phosphothreonine mark. 3 residues coordinate Zn(2+): histidine 94, histidine 96, and histidine 119. Tyrosine 127 bears the Phosphotyrosine mark. Residue threonine 129 is modified to Phosphothreonine. Cysteine 182 and cysteine 187 each carry S-glutathionyl cysteine. Residue 198-199 (TT) participates in substrate binding. The residue at position 216 (threonine 216) is a Phosphothreonine. A Phosphoserine modification is found at serine 219.

This sequence belongs to the alpha-carbonic anhydrase family. The cofactor is Zn(2+). In terms of processing, S-thiolated both by thiol-disulfide exchange with glutathione disulfide and by oxyradical-initiated S-thiolation with reduced glutathione. Post-translationally, S-glutathionylated in hepatocytes under oxidative stress. Expressed in liver and muscle.

The protein resides in the cytoplasm. It carries out the reaction hydrogencarbonate + H(+) = CO2 + H2O. Inhibited by acetazolamide. In terms of biological role, reversible hydration of carbon dioxide. The chain is Carbonic anhydrase 3 (Ca3) from Rattus norvegicus (Rat).